The primary structure comprises 102 residues: Small ribosomal subunit protein uS10 (102 aa).

The protein belongs to the universal ribosomal protein uS10 family. Part of the 30S ribosomal subunit.

In terms of biological role, involved in the binding of tRNA to the ribosomes. This is Small ribosomal subunit protein uS10 from Exiguobacterium sp. (strain ATCC BAA-1283 / AT1b).